The sequence spans 99 residues: Ferredoxin (99 aa).

The 93-residue stretch at 4 to 96 folds into the 2Fe-2S ferredoxin-type domain; the sequence is YKIHLLCEEE…DCTISTHVEQ (93 aa). [2Fe-2S] cluster contacts are provided by Cys-42, Cys-47, Cys-50, and Cys-80.

This sequence belongs to the 2Fe2S plant-type ferredoxin family. In terms of assembly, forms a complex with heterodimeric ferredoxin-thioredoxin reductase (FTR) and thioredoxin. [2Fe-2S] cluster is required as a cofactor.

It localises to the plastid. The protein localises to the chloroplast. In terms of biological role, ferredoxins are iron-sulfur proteins that transfer electrons in a wide variety of metabolic reactions. The polypeptide is Ferredoxin (petF) (Pyropia yezoensis (Susabi-nori)).